The primary structure comprises 636 residues: Chaperone protein DnaK (636 aa).

Residue T198 is modified to Phosphothreonine; by autocatalysis. The segment at 600 to 636 (IAQQQAQAQQGSAEAGAQSQEDDVVDAEFEEVKDDKK) is disordered. The span at 601–618 (AQQQAQAQQGSAEAGAQS) shows a compositional bias: low complexity. The segment covering 619–636 (QEDDVVDAEFEEVKDDKK) has biased composition (acidic residues).

Belongs to the heat shock protein 70 family.

Its function is as follows. Acts as a chaperone. The chain is Chaperone protein DnaK from Vibrio vulnificus (strain CMCP6).